An 83-amino-acid polypeptide reads, in one-letter code: Putative membrane protein insertion efficiency factor (83 aa).

Belongs to the UPF0161 family.

Its subcellular location is the cell membrane. Functionally, could be involved in insertion of integral membrane proteins into the membrane. This is Putative membrane protein insertion efficiency factor from Streptococcus thermophilus (strain ATCC BAA-250 / LMG 18311).